The primary structure comprises 206 residues: Regulator of rDNA transcription 14 (206 aa).

The disordered stretch occupies residues phenylalanine 178–aspartate 206. 3 positions are modified to phosphoserine: serine 197, serine 202, and serine 203. The span at serine 197–aspartate 206 shows a compositional bias: acidic residues.

It belongs to the RRT14 family.

The protein localises to the nucleus. It localises to the nucleolus. In terms of biological role, involved in ribosome biogenesis, probably through modulation of rDNA transcription. The sequence is that of Regulator of rDNA transcription 14 (RRT14) from Saccharomyces cerevisiae (strain AWRI1631) (Baker's yeast).